Reading from the N-terminus, the 77-residue chain is NEDD8-like protein RUB1 (77 aa).

Residues 1-74 enclose the Ubiquitin-like domain; sequence MIVKVKTLTG…MQLHLVLTLR (74 aa). A Glycyl lysine isopeptide (Gly-Lys) (interchain with K-? in acceptor proteins) cross-link involves residue Gly76. A propeptide is located at residue Asn77.

Interacts with CDC53 and DCN1.

Functionally, ubiquitin-like protein modifier that can be covalently attached to lysine residues of target proteins. Activated by the dimeric UBA3-ULA1 E1 enzyme and conjugated by the E2 UBC12 to substrate proteins. RUB1-conjugated (neddylated) substrate proteins include the cullins CDC53, RTT101 and CUL3, and the modification enhances the ubiquitin-ligase activity of the corresponding cullin-RING-based E3 ubiquitin-protein ligase complexes (CRLs). This chain is NEDD8-like protein RUB1 (RUB1), found in Saccharomyces cerevisiae (strain ATCC 204508 / S288c) (Baker's yeast).